A 214-amino-acid chain; its full sequence is Cytolysin tenebrosin-B (214 aa).

Positions 1-19 are cleaved as a signal peptide; it reads MNRLIIVFIVVTMICAATA. The propeptide occupies 20-35; that stretch reads LSTKRRINKEEKDEKR. The tract at residues 38 to 47 is plays an important role in the hemolytic activity; sequence AVAGAVIEGA. The segment at 46–65 is N-terminal region; the sequence is GATLTFNVLQTVLKALGDIS. Positions 89, 122, 140, 142, 168, 172, and 173 each coordinate phosphocholine. The segment at 140 to 155 is trp-rich region, which is important for the binding to lipid membrane; sequence SIPFDYNLYSNWWNVK. The Cell attachment site, crucial for protein stability signature appears at 179-181; it reads RGD.

It belongs to the actinoporin family. Sea anemone subfamily. In terms of assembly, octamer or nonamer in membranes. Monomer in the soluble state.

It localises to the secreted. The protein localises to the nematocyst. Its subcellular location is the target cell membrane. Pore-forming protein that forms cations-selective hydrophilic pores of around 1 nm and causes cardiac stimulation and cytolysis. Pore formation is a multi-step process that involves specific recognition of membrane sphingomyelin (but neither cholesterol nor phosphatidylcholine) using aromatic rich region and adjacent phosphocholine (POC) binding site, firm binding to the membrane (mainly driven by hydrophobic interactions) accompanied by the transfer of the N-terminal region to the lipid-water interface and finally pore formation after oligomerization of monomers. The protein is Cytolysin tenebrosin-B of Actinia tenebrosa (Australian red waratah sea anemone).